The primary structure comprises 491 residues: MTVHFPFQNSYAALPDNFFARVAPTPVAAPRLIKLNRPLAAELGLNPAELETAEGAEILAGKTVPEGAEPIAMAYAGHQFGHFVPQLGDGRAVLLGEVVDKNGVRRDIQLKGSGPTPFSRRGDGRAALGPVLREYIVSEAMAALGIPTTRSLAAVVTGEQVYRGIALPGAVLTRVATSHIRVGTFQYFAARQDVEAVRRLADHVISRHYPDLAGTERPYHALLDAVIARQAKLIADWLLVGFIHGVMNTDNTSVSGETIDYGPCAFMDGYDPKQVFSSIDEFGRYAFANQPRIALWNLTRLAECLLPLFGDDKDQAIKEAEAALDGFAAQFTDAHQAGLRRKLGLFTQVEGDQPLAQALFDAMAAVKADFTLTFRRLSDAAGSGDDAPVRALFEDPTGLDEWLPRWRQRLADEPQTAAERAAAMRQVNPAFIPRNHRIEAVITAAVENDDYAPFEELHAVLARPYDDQPAFSAYAEPPQPDERVLQTFCGT.

ATP is bound by residues G88, G90, R91, K111, D123, G124, R174, and R181. Residue D250 is the Proton acceptor of the active site. 2 residues coordinate Mg(2+): N251 and D260. D260 is an ATP binding site.

It belongs to the SELO family. The cofactor is Mg(2+). Mn(2+) serves as cofactor.

It carries out the reaction L-seryl-[protein] + ATP = 3-O-(5'-adenylyl)-L-seryl-[protein] + diphosphate. The catalysed reaction is L-threonyl-[protein] + ATP = 3-O-(5'-adenylyl)-L-threonyl-[protein] + diphosphate. It catalyses the reaction L-tyrosyl-[protein] + ATP = O-(5'-adenylyl)-L-tyrosyl-[protein] + diphosphate. The enzyme catalyses L-histidyl-[protein] + UTP = N(tele)-(5'-uridylyl)-L-histidyl-[protein] + diphosphate. It carries out the reaction L-seryl-[protein] + UTP = O-(5'-uridylyl)-L-seryl-[protein] + diphosphate. The catalysed reaction is L-tyrosyl-[protein] + UTP = O-(5'-uridylyl)-L-tyrosyl-[protein] + diphosphate. Functionally, nucleotidyltransferase involved in the post-translational modification of proteins. It can catalyze the addition of adenosine monophosphate (AMP) or uridine monophosphate (UMP) to a protein, resulting in modifications known as AMPylation and UMPylation. This chain is Protein nucleotidyltransferase YdiU, found in Bradyrhizobium sp. (strain BTAi1 / ATCC BAA-1182).